Consider the following 622-residue polypeptide: Iron transport multicopper oxidase fio1 (622 aa).

The N-terminal stretch at 1-22 is a signal peptide; that stretch reads MNKFFSFPILGLLLTCVRFVVA. Over 23-553 the chain is Extracellular; the sequence is KERLFEWNVT…GEMPAGWTSK (531 aa). N-linked (GlcNAc...) asparagine glycans are attached at residues Asn-30 and Asn-79. 2 consecutive Plastocyanin-like domains span residues 49-147 and 194-304; these read IGVN…FIIN and TGLF…LSYN. Cu cation-binding residues include His-85 and His-87. Asn-117 and Asn-123 each carry an N-linked (GlcNAc...) asparagine glycan. His-129 and His-131 together coordinate Cu cation. N-linked (GlcNAc...) asparagine glycosylation is found at Asn-198, Asn-202, Asn-234, Asn-269, Asn-296, Asn-338, Asn-360, and Asn-376. The Plastocyanin-like 3 domain occupies 386-498; the sequence is EPVTYGPYTN…SGLLATFIEA (113 aa). His-417, His-420, His-422, His-480, Cys-481, His-482, and His-486 together coordinate Cu cation. Residue Asn-532 is glycosylated (N-linked (GlcNAc...) asparagine). The chain crosses the membrane as a helical span at residues 554–574; sequence AIGTMAACVISACIGMGSIIF. At 575 to 622 the chain is on the cytoplasmic side; the sequence is YGASIHPVPTEELDENDDLQEAALENAAMFLDTDKAVEKVVEGKDEIK.

Belongs to the multicopper oxidase family. Cu cation serves as cofactor.

The protein resides in the cell membrane. In terms of biological role, could be an iron transport multicopper oxidase, which is required for Fe(2+) high affinity uptake. May be required to oxidize Fe(2+) and release it from the transporter. Essential component of copper-dependent iron transport. This chain is Iron transport multicopper oxidase fio1 (fio1), found in Schizosaccharomyces pombe (strain 972 / ATCC 24843) (Fission yeast).